The following is a 104-amino-acid chain: A-type ATP synthase subunit F (104 aa).

The protein belongs to the V-ATPase F subunit family. Has multiple subunits with at least A(3), B(3), C, D, E, F, H, I and proteolipid K(x).

It localises to the cell membrane. Its function is as follows. Component of the A-type ATP synthase that produces ATP from ADP in the presence of a proton gradient across the membrane. In Thermoplasma volcanium (strain ATCC 51530 / DSM 4299 / JCM 9571 / NBRC 15438 / GSS1), this protein is A-type ATP synthase subunit F.